A 280-amino-acid polypeptide reads, in one-letter code: Ycf3-interacting protein 1, chloroplastic (280 aa).

The N-terminal 62 residues, 1 to 62, are a transit peptide targeting the chloroplast; it reads MTTQIFQLPL…NNRRFGSLIV (62 aa). A disordered region spans residues 75-103; it reads PVPLTLEQQEKEKQNRDDEEDEIDEGDVD. A compositionally biased stretch (acidic residues) spans 91 to 103; sequence DDEEDEIDEGDVD. The chain crosses the membrane as a helical span at residues 255-275; it reads ALYFVSALPVIIGISVVLILF.

Belongs to the Y3IP1/CEST family. As to quaternary structure, interacts with Ycf3. Expressed in cotyledons, rosette and cauline leaves, stems and sepals.

The protein resides in the plastid. The protein localises to the chloroplast thylakoid membrane. Nuclear genome-encoded factor that participates in photosystem I (PSI) biogenesis. Cooperates with the plastid genome-encoded protein PSI assembly Ycf3 in the assembly of stable PSI units in the thylakoid membrane. Involved in light-induced chloroplast development and growth. Involved in the plant response to abiotic and photooxidative stresses. May be involved in the suppression of photooxidative damage. The polypeptide is Ycf3-interacting protein 1, chloroplastic (Arabidopsis thaliana (Mouse-ear cress)).